A 353-amino-acid chain; its full sequence is MHFSSSSTLFTCITLIPLVCLILHASLSDAQLTPTFYDNSCPNVSNIVRDTIVNELRSDPRIAASILRLHFHDCFVNGCDASILLDNTTSFRTEKDAFGNANSARGFPVIDRMKAAVESACPRTVSCADLLTIAAQQSVTLAGGPSWRVPLGRRDSLQAFLDLANANLPAPFFTLPQLKDSFRNVGLNRSSDLVALSGGHTFGKNQCRFIMDRLYNFSNTGLPDPTLNTTYLQTLRGLCPLNGNLSALVDFDLRTPTIFDNKYYVNLEEQKGLIQSDQELFSSPNATDTIPLVRSFANSTQTFFNAFVEAMDRMGNITPLTGTQGQIRLNCRVVNSNSLLHDMVEVVDFVSSM.

The N-terminal stretch at 1-30 (MHFSSSSTLFTCITLIPLVCLILHASLSDA) is a signal peptide. A Pyrrolidone carboxylic acid modification is found at Gln31. 4 cysteine pairs are disulfide-bonded: Cys41–Cys121, Cys74–Cys79, Cys127–Cys331, and Cys207–Cys239. N-linked (GlcNAc...) asparagine glycosylation is present at Asn43. His72 functions as the Proton acceptor in the catalytic mechanism. Residues Asp73, Val76, Gly78, Asp80, and Ser82 each contribute to the Ca(2+) site. The N-linked (GlcNAc...) asparagine glycan is linked to Asn87. Residue Glu94 participates in Ca(2+) binding. Position 169 (Pro169) interacts with substrate. N-linked (GlcNAc...) asparagine glycosylation occurs at Asn188. His200 provides a ligand contact to heme b. Thr201 contributes to the Ca(2+) binding site. N-linked (GlcNAc...) asparagine glycans are attached at residues Asn216, Asn228, and Asn244. 3 residues coordinate Ca(2+): Asp252, Thr255, and Asp260. Asn285 and Asn298 each carry an N-linked (GlcNAc...) asparagine glycan. Residues 339–353 (LLHDMVEVVDFVSSM) constitute a propeptide that is removed on maturation.

Belongs to the peroxidase family. Classical plant (class III) peroxidase subfamily. Monomer. It depends on Ca(2+) as a cofactor. Heme b serves as cofactor.

Its subcellular location is the secreted. The protein resides in the vacuole. The catalysed reaction is 2 a phenolic donor + H2O2 = 2 a phenolic radical donor + 2 H2O. Its function is as follows. Removal of H(2)O(2), oxidation of toxic reductants, biosynthesis and degradation of lignin, suberization, auxin catabolism, response to environmental stresses such as wounding, pathogen attack and oxidative stress. These functions might be dependent on each isozyme/isoform in each plant tissue. This chain is Peroxidase C1A (PRXC1A), found in Armoracia rusticana (Horseradish).